The primary structure comprises 29 residues: Toxin Bcg III 15.67 (29 aa).

In terms of domain architecture, EGF-like spans 2-29 (QGTACTGEHAHSFCLNGGTCRHIQQLGE). A disulfide bond links Cys6 and Cys21.

The protein localises to the secreted. It is found in the nematocyst. In terms of biological role, has both toxic and EGF activity. This Bunodosoma cangicum (Sea anemone) protein is Toxin Bcg III 15.67.